The following is a 489-amino-acid chain: Inositol-pentakisphosphate 2-kinase (489 aa).

Positions 136-140 match the EXKPK motif motif; that stretch reads EIKPK.

This sequence belongs to the IPK1 type 2 family. In brain, it is expressed throughout the hippocampus (CA1, CA2, CA3 and dentate gyrus), inner layers of the cerebral cortex, and Purkinje cells of the cerebellum. In heart, it is expressed in cardiomyocytes but not in interstitial cells, blood vessels, or valves. Also expressed in testis.

It localises to the cytoplasm. The protein resides in the nucleus. It carries out the reaction 1D-myo-inositol 1,3,4,5,6-pentakisphosphate + ATP = 1D-myo-inositol hexakisphosphate + ADP + H(+). In terms of biological role, phosphorylates Ins(1,3,4,5,6)P5 at position 2 to form Ins(1,2,3,4,5,6)P6 (InsP6 or phytate). InsP6 is involved in many processes such as mRNA export, non-homologous end-joining, endocytosis, ion channel regulation. It also protects cells from TNF-alpha-induced apoptosis. This Mus musculus (Mouse) protein is Inositol-pentakisphosphate 2-kinase (Ippk).